A 208-amino-acid polypeptide reads, in one-letter code: Ribosomal RNA large subunit methyltransferase E (208 aa).

S-adenosyl-L-methionine is bound by residues G63, W65, D83, D99, and D124. The active-site Proton acceptor is K164.

This sequence belongs to the class I-like SAM-binding methyltransferase superfamily. RNA methyltransferase RlmE family.

Its subcellular location is the cytoplasm. It carries out the reaction uridine(2552) in 23S rRNA + S-adenosyl-L-methionine = 2'-O-methyluridine(2552) in 23S rRNA + S-adenosyl-L-homocysteine + H(+). Its function is as follows. Specifically methylates the uridine in position 2552 of 23S rRNA at the 2'-O position of the ribose in the fully assembled 50S ribosomal subunit. The polypeptide is Ribosomal RNA large subunit methyltransferase E (Salmonella paratyphi A (strain ATCC 9150 / SARB42)).